Reading from the N-terminus, the 288-residue chain is Nucleotide-binding protein Gura_2968 (288 aa).

8–15 (GLSGSGKS) contacts ATP. 59–62 (DIRG) lines the GTP pocket.

It belongs to the RapZ-like family.

Its function is as follows. Displays ATPase and GTPase activities. The polypeptide is Nucleotide-binding protein Gura_2968 (Geotalea uraniireducens (strain Rf4) (Geobacter uraniireducens)).